Here is a 161-residue protein sequence, read N- to C-terminus: 2-C-methyl-D-erythritol 2,4-cyclodiphosphate synthase (161 aa).

Positions 11 and 13 each coordinate a divalent metal cation. 4-CDP-2-C-methyl-D-erythritol 2-phosphate contacts are provided by residues 11-13 and 37-38; these read DIH and HS. Residue His-45 participates in a divalent metal cation binding. 4-CDP-2-C-methyl-D-erythritol 2-phosphate is bound by residues 59–61 and 135–138; these read DIG and TTNE.

The protein belongs to the IspF family. As to quaternary structure, homotrimer. It depends on a divalent metal cation as a cofactor.

It catalyses the reaction 4-CDP-2-C-methyl-D-erythritol 2-phosphate = 2-C-methyl-D-erythritol 2,4-cyclic diphosphate + CMP. The protein operates within isoprenoid biosynthesis; isopentenyl diphosphate biosynthesis via DXP pathway; isopentenyl diphosphate from 1-deoxy-D-xylulose 5-phosphate: step 4/6. Its function is as follows. Involved in the biosynthesis of isopentenyl diphosphate (IPP) and dimethylallyl diphosphate (DMAPP), two major building blocks of isoprenoid compounds. Catalyzes the conversion of 4-diphosphocytidyl-2-C-methyl-D-erythritol 2-phosphate (CDP-ME2P) to 2-C-methyl-D-erythritol 2,4-cyclodiphosphate (ME-CPP) with a corresponding release of cytidine 5-monophosphate (CMP). The polypeptide is 2-C-methyl-D-erythritol 2,4-cyclodiphosphate synthase (Acaryochloris marina (strain MBIC 11017)).